The primary structure comprises 1063 residues: Error-prone DNA polymerase (1063 aa).

Belongs to the DNA polymerase type-C family. DnaE2 subfamily.

The protein localises to the cytoplasm. It catalyses the reaction DNA(n) + a 2'-deoxyribonucleoside 5'-triphosphate = DNA(n+1) + diphosphate. Functionally, DNA polymerase involved in damage-induced mutagenesis and translesion synthesis (TLS). It is not the major replicative DNA polymerase. The chain is Error-prone DNA polymerase from Burkholderia mallei (strain ATCC 23344).